The sequence spans 464 residues: tRNA-2-methylthio-N(6)-dimethylallyladenosine synthase (464 aa).

An MTTase N-terminal domain is found at 5–122 (RKLYVKSFGC…LPEMLARVRD (118 aa)). Residues cysteine 14, cysteine 50, cysteine 85, cysteine 163, cysteine 167, and cysteine 170 each coordinate [4Fe-4S] cluster. Residues 149–383 (KKRGPTAFVT…VLEASKTAFD (235 aa)) enclose the Radical SAM core domain. The 63-residue stretch at 384-446 (RACMGRRFDI…PNSLAGQVVD (63 aa)) folds into the TRAM domain.

This sequence belongs to the methylthiotransferase family. MiaB subfamily. In terms of assembly, monomer. [4Fe-4S] cluster is required as a cofactor.

It is found in the cytoplasm. It catalyses the reaction N(6)-dimethylallyladenosine(37) in tRNA + (sulfur carrier)-SH + AH2 + 2 S-adenosyl-L-methionine = 2-methylsulfanyl-N(6)-dimethylallyladenosine(37) in tRNA + (sulfur carrier)-H + 5'-deoxyadenosine + L-methionine + A + S-adenosyl-L-homocysteine + 2 H(+). In terms of biological role, catalyzes the methylthiolation of N6-(dimethylallyl)adenosine (i(6)A), leading to the formation of 2-methylthio-N6-(dimethylallyl)adenosine (ms(2)i(6)A) at position 37 in tRNAs that read codons beginning with uridine. This chain is tRNA-2-methylthio-N(6)-dimethylallyladenosine synthase, found in Azorhizobium caulinodans (strain ATCC 43989 / DSM 5975 / JCM 20966 / LMG 6465 / NBRC 14845 / NCIMB 13405 / ORS 571).